The chain runs to 280 residues: Shikimate dehydrogenase (NADP(+)) (280 aa).

Shikimate contacts are provided by residues Ser20–Ser22 and Thr67. Lys71 serves as the catalytic Proton acceptor. Residue Asp82 participates in NADP(+) binding. Shikimate is bound by residues Asn91 and Asp106. NADP(+) contacts are provided by residues Gly131 to Ser135 and Leu220. Tyr222 contributes to the shikimate binding site. NADP(+) is bound at residue Gly243.

Belongs to the shikimate dehydrogenase family. Homodimer.

The enzyme catalyses shikimate + NADP(+) = 3-dehydroshikimate + NADPH + H(+). The protein operates within metabolic intermediate biosynthesis; chorismate biosynthesis; chorismate from D-erythrose 4-phosphate and phosphoenolpyruvate: step 4/7. In terms of biological role, involved in the biosynthesis of the chorismate, which leads to the biosynthesis of aromatic amino acids. Catalyzes the reversible NADPH linked reduction of 3-dehydroshikimate (DHSA) to yield shikimate (SA). This chain is Shikimate dehydrogenase (NADP(+)), found in Rhodopseudomonas palustris (strain HaA2).